The primary structure comprises 524 residues: Cytokinin dehydrogenase 7 (524 aa).

Residues Asn58 to Ala238 enclose the FAD-binding PCMH-type domain. Positions 91, 93, 94, and 95 each coordinate FAD. The residue at position 96 (His96) is a Pros-8alpha-FAD histidine. Positions 97, 101, 162, 167, 173, 177, 228, 479, 514, and 517 each coordinate FAD.

It belongs to the oxygen-dependent FAD-linked oxidoreductase family. It depends on FAD as a cofactor. In terms of tissue distribution, expressed in the vasculature of roots, hypocotyls, cotyledons and leaves of young seedlings. In flowers, expressed in the transmitting tissue of the gynoecium prior to pollination. Expressed in the mature embryo sac with maximum activity in the egg cell and the synergids.

Its subcellular location is the cytoplasm. It is found in the cytosol. It carries out the reaction N(6)-dimethylallyladenine + A + H2O = 3-methyl-2-butenal + adenine + AH2. Functionally, catalyzes the oxidation of cytokinins, a family of N(6)-substituted adenine derivatives that are plant hormones, where the substituent is an isopentenyl group. Catalyzes in vitro the oxidation of various types of cytokinin nucleotides that are known as direct products of cytokinin biosynthesis. This chain is Cytokinin dehydrogenase 7 (CKX7), found in Arabidopsis thaliana (Mouse-ear cress).